A 252-amino-acid polypeptide reads, in one-letter code: 3-dehydroquinate dehydratase (252 aa).

3-dehydroquinate-binding positions include serine 21, 46-48 (EWR), and arginine 82. The active-site Proton donor/acceptor is the histidine 143. The Schiff-base intermediate with substrate role is filled by lysine 170. 3 residues coordinate 3-dehydroquinate: arginine 213, serine 232, and glutamine 236.

This sequence belongs to the type-I 3-dehydroquinase family. Homodimer.

It catalyses the reaction 3-dehydroquinate = 3-dehydroshikimate + H2O. It participates in metabolic intermediate biosynthesis; chorismate biosynthesis; chorismate from D-erythrose 4-phosphate and phosphoenolpyruvate: step 3/7. Involved in the third step of the chorismate pathway, which leads to the biosynthesis of aromatic amino acids. Catalyzes the cis-dehydration of 3-dehydroquinate (DHQ) and introduces the first double bond of the aromatic ring to yield 3-dehydroshikimate. This Shigella flexneri serotype 5b (strain 8401) protein is 3-dehydroquinate dehydratase.